Reading from the N-terminus, the 210-residue chain is Thymidylate kinase (210 aa).

10–17 (GPEGAGKS) is a binding site for ATP.

This sequence belongs to the thymidylate kinase family.

It catalyses the reaction dTMP + ATP = dTDP + ADP. Functionally, phosphorylation of dTMP to form dTDP in both de novo and salvage pathways of dTTP synthesis. The chain is Thymidylate kinase from Pseudomonas aeruginosa (strain UCBPP-PA14).